The chain runs to 332 residues: GTP 3',8-cyclase (332 aa).

One can recognise a Radical SAM core domain in the interval 7-221; sequence SYDRLHDYVR…FDTCKDNGLA (215 aa). A GTP-binding site is contributed by arginine 16. The [4Fe-4S] cluster site is built by cysteine 23 and cysteine 27. Tyrosine 29 contributes to the S-adenosyl-L-methionine binding site. Residue cysteine 30 participates in [4Fe-4S] cluster binding. Arginine 66 contributes to the GTP binding site. Glycine 70 is an S-adenosyl-L-methionine binding site. Threonine 97 serves as a coordination point for GTP. Residue serine 121 coordinates S-adenosyl-L-methionine. Lysine 158 contributes to the GTP binding site. Methionine 192 is an S-adenosyl-L-methionine binding site. [4Fe-4S] cluster-binding residues include cysteine 256 and cysteine 259. 261–263 is a binding site for GTP; the sequence is RLR. Cysteine 273 is a binding site for [4Fe-4S] cluster.

This sequence belongs to the radical SAM superfamily. MoaA family. Monomer and homodimer. [4Fe-4S] cluster is required as a cofactor.

It catalyses the reaction GTP + AH2 + S-adenosyl-L-methionine = (8S)-3',8-cyclo-7,8-dihydroguanosine 5'-triphosphate + 5'-deoxyadenosine + L-methionine + A + H(+). The protein operates within cofactor biosynthesis; molybdopterin biosynthesis. In terms of biological role, catalyzes the cyclization of GTP to (8S)-3',8-cyclo-7,8-dihydroguanosine 5'-triphosphate. The polypeptide is GTP 3',8-cyclase (Lactiplantibacillus plantarum (strain ATCC BAA-793 / NCIMB 8826 / WCFS1) (Lactobacillus plantarum)).